Reading from the N-terminus, the 402-residue chain is Calcium-responsive transactivator (402 aa).

An N-terminal auto-inhibitory domain; necessary for interaction with SMARCA4/BRG1 region spans residues 1–148; sequence MSVAFASARP…TLPTTSMSMS (148 aa). The SH2-binding signature appears at 50 to 53; it reads YQQI. Disordered regions lie at residues 72-129, 141-170, 195-250, 262-290, and 305-402; these read QSLL…GPNH, PTTS…SVPL, MHQQ…SSQQ, QYGH…YQPA, and TQHY…NYQQ. The span at 92 to 106 shows a compositional bias: low complexity; that stretch reads QSGSAQGLHSQGSLS. Polar residues predominate over residues 117 to 129; sequence SLMQAQIGNGPNH. The tract at residues 149–237 is methionine-rich intra-molecular domain; sequence GSGHGSGPGY…GGGVMGQRPM (89 aa). Over residues 196 to 224 the composition is skewed to low complexity; it reads HQQAASSHYSAAQGGSQHYQGQSMAMMGQ. The interval 251–323 is MFD domain; the sequence is YLGQEEYYGG…SQYSQQQTGY (73 aa). Low complexity-rich tracts occupy residues 311–379 and 390–402; these read GGNS…RASQ and YGYE…NYQQ. The tract at residues 340 to 402 is necessary for nuclear localization; that stretch reads NQQSYPGQQQ…EQGQYGNYQQ (63 aa). The short motif at 359–362 is the SH2-binding element; the sequence is SQYS. The SH3-binding signature appears at 377 to 385; the sequence is ASQTGPSTQ. The tract at residues 393-402 is necessary for interaction with CREBBP and for the recruitment of CREBBP to the nuclear bodies; the sequence is EQGQYGNYQQ. The SH2-binding motif lies at 397–400; the sequence is YGNY.

The protein belongs to the SS18 family. In terms of assembly, homodimer. Dimerization may be necessary for its function in neuronal dendritic development. Interacts (via C-terminus) with CREBBP (via N-terminus), EP300 and SMARCA4/BRG1. Interacts with the nBAF complex. Association with CREBBP facilitates transcription while the association with SMARCA4/BRG1 suppresses CREST-mediated transcription in resting neurons.

It is found in the nucleus. It localises to the chromosome. The protein localises to the centromere. The protein resides in the kinetochore. In terms of biological role, transcriptional activator which is required for calcium-dependent dendritic growth and branching in cortical neurons. Recruits CREB-binding protein (CREBBP) to nuclear bodies. Component of the CREST-BRG1 complex, a multiprotein complex that regulates promoter activation by orchestrating a calcium-dependent release of a repressor complex and a recruitment of an activator complex. In resting neurons, transcription of the c-FOS promoter is inhibited by BRG1-dependent recruitment of a phospho-RB1-HDAC1 repressor complex. Upon calcium influx, RB1 is dephosphorylated by calcineurin, which leads to release of the repressor complex. At the same time, there is increased recruitment of CREBBP to the promoter by a CREST-dependent mechanism, which leads to transcriptional activation. The CREST-BRG1 complex also binds to the NR2B promoter, and activity-dependent induction of NR2B expression involves a release of HDAC1 and recruitment of CREBBP. The sequence is that of Calcium-responsive transactivator (SS18L1) from Bos taurus (Bovine).